Reading from the N-terminus, the 189-residue chain is Glycerol-3-phosphate acyltransferase (189 aa).

5 helical membrane-spanning segments follow: residues 1 to 21, 51 to 71, 77 to 97, 111 to 131, and 151 to 171; these read MFWLLAILAYLLGSLSFAILL, LAILTLLGDLCKGLLPVLIAS, LQDQAWIGVCAVIGHLFPLYF, MLLGLYPPAALLAVCAWLLTF, and LLAWQEPAALLPMSTLTLLIV.

It belongs to the PlsY family. In terms of assembly, probably interacts with PlsX.

The protein resides in the cell inner membrane. It carries out the reaction an acyl phosphate + sn-glycerol 3-phosphate = a 1-acyl-sn-glycero-3-phosphate + phosphate. The protein operates within lipid metabolism; phospholipid metabolism. Its function is as follows. Catalyzes the transfer of an acyl group from acyl-phosphate (acyl-PO(4)) to glycerol-3-phosphate (G3P) to form lysophosphatidic acid (LPA). This enzyme utilizes acyl-phosphate as fatty acyl donor, but not acyl-CoA or acyl-ACP. The protein is Glycerol-3-phosphate acyltransferase of Pseudomonas fluorescens (strain Pf0-1).